A 30-amino-acid polypeptide reads, in one-letter code: Dendrotoxin B (30 aa).

Cysteines 3 and 22 form a disulfide.

This sequence belongs to the three-finger toxin family. Short-chain subfamily. Orphan group XI sub-subfamily. Contains 4 disulfide bonds. Expressed by the venom gland.

The protein localises to the secreted. Functionally, blocks voltage-gated potassium channels (Kv). This is the slowly inactivating phase of potassium efflux which is blocked by this toxin. The protein is Dendrotoxin B of Dendroaspis angusticeps (Eastern green mamba).